We begin with the raw amino-acid sequence, 233 residues long: Uracil-DNA glycosylase (233 aa).

Residue D70 is the Proton acceptor of the active site.

This sequence belongs to the uracil-DNA glycosylase (UDG) superfamily. UNG family.

Its subcellular location is the cytoplasm. The enzyme catalyses Hydrolyzes single-stranded DNA or mismatched double-stranded DNA and polynucleotides, releasing free uracil.. Excises uracil residues from the DNA which can arise as a result of misincorporation of dUMP residues by DNA polymerase or due to deamination of cytosine. This is Uracil-DNA glycosylase from Helicobacter pylori (strain P12).